The sequence spans 67 residues: Large ribosomal subunit protein bL35 (67 aa).

It belongs to the bacterial ribosomal protein bL35 family.

This Acidovorax ebreus (strain TPSY) (Diaphorobacter sp. (strain TPSY)) protein is Large ribosomal subunit protein bL35.